Here is an 802-residue protein sequence, read N- to C-terminus: Ribosomal protein S6 kinase alpha-5 (802 aa).

Over residues 1–22 (MEEEGGSSGGAAGTSADGGDGG) the composition is skewed to gly residues. The tract at residues 1-23 (MEEEGGSSGGAAGTSADGGDGGE) is disordered. The Protein kinase 1 domain occupies 49 to 318 (FELLKVLGTG…ADEIKEHLFF (270 aa)). ATP is bound by residues 55 to 63 (LGTGAYGKV) and lysine 81. Aspartate 177 functions as the Proton acceptor in the catalytic mechanism. Serine 212 carries the phosphoserine; by autocatalysis modification. Residues 319–387 (QKINWDDLAA…VAPSILFKRN (69 aa)) enclose the AGC-kinase C-terminal domain. Position 360 is a phosphoserine; by MAPK1, MAPK3 and MAPK14 (serine 360). A phosphoserine; by autocatalysis mark is found at serine 376 and serine 381. In terms of domain architecture, Protein kinase 2 spans 426–687 (DLKDKPLGEG…MSGLRYNEWL (262 aa)). ATP-binding positions include 432–440 (LGEGSFSIC) and lysine 455. Aspartate 544 (proton acceptor) is an active-site residue. Threonine 581 bears the Phosphothreonine; by MAPK1, MAPK3 and MAPK14 mark. Serine 647, serine 657, serine 691, and serine 695 each carry phosphoserine. Position 700 is a phosphothreonine; by MAPK1, MAPK3 and MAPK14 (threonine 700). The segment at 741-802 (AKRRKMKKTS…TLFQFSDSVA (62 aa)) is disordered. Residues 749–779 (TSTSTETRSSSSESSHSSSSHSHGKTTPTKT) show a composition bias toward low complexity. A phosphoserine; by autocatalysis mark is found at serine 750, serine 752, and serine 758. Residues 780–802 (LQPSNPADSNNPETLFQFSDSVA) show a composition bias toward polar residues. Serine 798 bears the Phosphoserine mark.

This sequence belongs to the protein kinase superfamily. AGC Ser/Thr protein kinase family. S6 kinase subfamily. As to quaternary structure, forms a complex with either MAPK1/ERK2 or MAPK3/ERK1 in quiescent cells which transiently dissociates following mitogenic stimulation. Also associates with MAPK14/p38-alpha. Activated RPS6KA5 associates with and phosphorylates the NF-kappa-B p65 subunit RELA. Interacts with CREBBP and EP300. Requires Mg(2+) as cofactor. In terms of processing, ser-376 and Thr-581 phosphorylation is required for kinase activity. Ser-376 and Ser-212 are autophosphorylated by the C-terminal kinase domain, and their phosphorylation is essential for the catalytic activity of the N-terminal kinase domain. Phosphorylated at Ser-360, Thr-581 and Thr-700 by MAPK1/ERK2, MAPK3/ERK1 and MAPK14/p38-alpha. Autophosphorylated at Ser-750, Ser-752 and Ser-758 by the N-terminal kinase domain. Post-translationally, ubiquitinated.

The protein resides in the nucleus. The catalysed reaction is L-seryl-[protein] + ATP = O-phospho-L-seryl-[protein] + ADP + H(+). It catalyses the reaction L-threonyl-[protein] + ATP = O-phospho-L-threonyl-[protein] + ADP + H(+). Its activity is regulated as follows. Activated by phosphorylation at Ser-360, Thr-581 and Thr-700 by MAPK1/ERK2, MAPK3/ERK1 and MAPK14/p38-alpha, and by further autophosphorylation of Ser-212, Ser-376 and Ser-381 by the activated C-terminal kinase domain. The active N-terminal kinase domain finally phosphorylates downstream substrates, as well as Ser-750, Ser-752 and Ser-758 in its own C-terminal region. Serine/threonine-protein kinase that is required for the mitogen or stress-induced phosphorylation of the transcription factors CREB1 and ATF1 and for the regulation of the transcription factors RELA, STAT3 and ETV1/ER81, and that contributes to gene activation by histone phosphorylation and functions in the regulation of inflammatory genes. Phosphorylates CREB1 and ATF1 in response to mitogenic or stress stimuli such as UV-C irradiation, epidermal growth factor (EGF) and anisomycin. Plays an essential role in the control of RELA transcriptional activity in response to TNF and upon glucocorticoid, associates in the cytoplasm with the glucocorticoid receptor NR3C1 and contributes to RELA inhibition and repression of inflammatory gene expression. In skeletal myoblasts is required for phosphorylation of RELA at 'Ser-276' during oxidative stress. In erythropoietin-stimulated cells, is necessary for the 'Ser-727' phosphorylation of STAT3 and regulation of its transcriptional potential. Phosphorylates ETV1/ER81 at 'Ser-191' and 'Ser-216', and thereby regulates its ability to stimulate transcription, which may be important during development and breast tumor formation. Directly represses transcription via phosphorylation of 'Ser-1' of histone H2A. Phosphorylates 'Ser-10' of histone H3 in response to mitogenics, stress stimuli and EGF, which results in the transcriptional activation of several immediate early genes, including proto-oncogenes c-fos/FOS and c-jun/JUN. May also phosphorylate 'Ser-28' of histone H3. Mediates the mitogen- and stress-induced phosphorylation of high mobility group protein 1 (HMGN1/HMG14). In lipopolysaccharide-stimulated primary macrophages, acts downstream of the Toll-like receptor TLR4 to limit the production of pro-inflammatory cytokines. Functions probably by inducing transcription of the MAP kinase phosphatase DUSP1 and the anti-inflammatory cytokine interleukin 10 (IL10), via CREB1 and ATF1 transcription factors. Plays a role in neuronal cell death by mediating the downstream effects of excitotoxic injury. Phosphorylates TRIM7 at 'Ser-107' in response to growth factor signaling via the MEK/ERK pathway, thereby stimulating its ubiquitin ligase activity. In Pongo abelii (Sumatran orangutan), this protein is Ribosomal protein S6 kinase alpha-5 (RPS6KA5).